The primary structure comprises 149 residues: Large ribosomal subunit protein bL9 (149 aa).

It belongs to the bacterial ribosomal protein bL9 family.

Binds to the 23S rRNA. This is Large ribosomal subunit protein bL9 from Thiobacillus denitrificans (strain ATCC 25259 / T1).